Reading from the N-terminus, the 80-residue chain is Metallothionein-like protein BIF98 (80 aa).

The protein belongs to the metallothionein superfamily. Type 15 family.

Its function is as follows. Metallothioneins have a high content of cysteine residues that bind various heavy metals. This Brassica rapa subsp. pekinensis (Chinese cabbage) protein is Metallothionein-like protein BIF98.